Consider the following 180-residue polypeptide: uncharacterized protein (180 aa).

A coiled-coil region spans residues 3 to 33 (QQQSNNSNDNKEQLDRVIESLNRVNSETKQI).

This is an uncharacterized protein from Acanthamoeba polyphaga (Amoeba).